The primary structure comprises 69 residues: Cytochrome c oxidase subunit 8A, mitochondrial (69 aa).

Residues 1 to 25 (MSSLTPLLLRSLTGPARRLMVPRAQ) constitute a mitochondrion transit peptide. Positions 2–19 (SSLTPLLLRSLTGPARRL) match the SIFI-degron motif. Over 26–36 (VHSKPPREQLG) the chain is Mitochondrial matrix. Residues 37–60 (VLDITIGLTSCFVCCLLPAGWVLS) form a helical membrane-spanning segment. At 61–69 (HLESYKKRE) the chain is on the mitochondrial intermembrane side.

This sequence belongs to the cytochrome c oxidase VIII family. As to quaternary structure, component of the cytochrome c oxidase (complex IV, CIV), a multisubunit enzyme composed of 14 subunits. The complex is composed of a catalytic core of 3 subunits MT-CO1, MT-CO2 and MT-CO3, encoded in the mitochondrial DNA, and 11 supernumerary subunits COX4I, COX5A, COX5B, COX6A, COX6B, COX6C, COX7A, COX7B, COX7C, COX8 and NDUFA4, which are encoded in the nuclear genome. The complex exists as a monomer or a dimer and forms supercomplexes (SCs) in the inner mitochondrial membrane with NADH-ubiquinone oxidoreductase (complex I, CI) and ubiquinol-cytochrome c oxidoreductase (cytochrome b-c1 complex, complex III, CIII), resulting in different assemblies (supercomplex SCI(1)III(2)IV(1) and megacomplex MCI(2)III(2)IV(2)). Post-translationally, in response to mitochondrial stress, the precursor protein is ubiquitinated by the SIFI complex in the cytoplasm before mitochondrial import, leading to its degradation. Within the SIFI complex, UBR4 initiates ubiquitin chain that are further elongated or branched by KCMF1.

It is found in the mitochondrion inner membrane. Its pathway is energy metabolism; oxidative phosphorylation. In terms of biological role, component of the cytochrome c oxidase, the last enzyme in the mitochondrial electron transport chain which drives oxidative phosphorylation. The respiratory chain contains 3 multisubunit complexes succinate dehydrogenase (complex II, CII), ubiquinol-cytochrome c oxidoreductase (cytochrome b-c1 complex, complex III, CIII) and cytochrome c oxidase (complex IV, CIV), that cooperate to transfer electrons derived from NADH and succinate to molecular oxygen, creating an electrochemical gradient over the inner membrane that drives transmembrane transport and the ATP synthase. Cytochrome c oxidase is the component of the respiratory chain that catalyzes the reduction of oxygen to water. Electrons originating from reduced cytochrome c in the intermembrane space (IMS) are transferred via the dinuclear copper A center (CU(A)) of subunit 2 and heme A of subunit 1 to the active site in subunit 1, a binuclear center (BNC) formed by heme A3 and copper B (CU(B)). The BNC reduces molecular oxygen to 2 water molecules using 4 electrons from cytochrome c in the IMS and 4 protons from the mitochondrial matrix. The protein is Cytochrome c oxidase subunit 8A, mitochondrial (Cox8a) of Rattus norvegicus (Rat).